The chain runs to 182 residues: MSDLKTIAQPYAKAAFDFALANKSLDQWAYMLMTTAEVASQPVILQEIKEIDFKGAKNAEAFTQMFLDICEGLLDEHCQNFVRVMAENGRLIVLPDVLNLFMEMKADFERTIEATVLSVEPLTEEQKVNLVKALEKRLSRTVELDCQIDESLVGGMLIKAGELVIDGTLKSSINRLASSLQA.

This sequence belongs to the ATPase delta chain family. As to quaternary structure, F-type ATPases have 2 components, F(1) - the catalytic core - and F(0) - the membrane proton channel. F(1) has five subunits: alpha(3), beta(3), gamma(1), delta(1), epsilon(1). F(0) has three main subunits: a(1), b(2) and c(10-14). The alpha and beta chains form an alternating ring which encloses part of the gamma chain. F(1) is attached to F(0) by a central stalk formed by the gamma and epsilon chains, while a peripheral stalk is formed by the delta and b chains.

The protein localises to the cell inner membrane. F(1)F(0) ATP synthase produces ATP from ADP in the presence of a proton or sodium gradient. F-type ATPases consist of two structural domains, F(1) containing the extramembraneous catalytic core and F(0) containing the membrane proton channel, linked together by a central stalk and a peripheral stalk. During catalysis, ATP synthesis in the catalytic domain of F(1) is coupled via a rotary mechanism of the central stalk subunits to proton translocation. In terms of biological role, this protein is part of the stalk that links CF(0) to CF(1). It either transmits conformational changes from CF(0) to CF(1) or is implicated in proton conduction. This chain is ATP synthase subunit delta 2, found in Photobacterium profundum (strain SS9).